We begin with the raw amino-acid sequence, 295 residues long: Elongation factor Ts (295 aa).

The tract at residues 79-82 (TDFV) is involved in Mg(2+) ion dislocation from EF-Tu.

This sequence belongs to the EF-Ts family.

It localises to the cytoplasm. Associates with the EF-Tu.GDP complex and induces the exchange of GDP to GTP. It remains bound to the aminoacyl-tRNA.EF-Tu.GTP complex up to the GTP hydrolysis stage on the ribosome. The sequence is that of Elongation factor Ts from Mycoplasma mycoides subsp. mycoides SC (strain CCUG 32753 / NCTC 10114 / PG1).